Reading from the N-terminus, the 126-residue chain is Large ribosomal subunit protein bL17 (126 aa).

It belongs to the bacterial ribosomal protein bL17 family. Part of the 50S ribosomal subunit. Contacts protein L32.

In Aliivibrio salmonicida (strain LFI1238) (Vibrio salmonicida (strain LFI1238)), this protein is Large ribosomal subunit protein bL17.